Consider the following 363-residue polypeptide: Oxygen-dependent coproporphyrinogen-III oxidase (363 aa).

Substrate is bound at residue Ser-119. 2 residues coordinate a divalent metal cation: His-123 and His-133. The Proton donor role is filled by His-133. 135–137 (NYR) is a binding site for substrate. A divalent metal cation is bound by residues His-167 and His-197. Residues 287–322 (YVEFNLVWDRGTIFGLQTNGRTESILMSLPPLVRWE) form an important for dimerization region.

It belongs to the aerobic coproporphyrinogen-III oxidase family. As to quaternary structure, homodimer. The cofactor is a divalent metal cation.

It localises to the cytoplasm. It catalyses the reaction coproporphyrinogen III + O2 + 2 H(+) = protoporphyrinogen IX + 2 CO2 + 2 H2O. It participates in porphyrin-containing compound metabolism; protoporphyrin-IX biosynthesis; protoporphyrinogen-IX from coproporphyrinogen-III (O2 route): step 1/1. Involved in the heme and chlorophyll biosynthesis. Catalyzes the aerobic oxidative decarboxylation of propionate groups of rings A and B of coproporphyrinogen-III to yield the vinyl groups in protoporphyrinogen-IX. The sequence is that of Oxygen-dependent coproporphyrinogen-III oxidase from Parasynechococcus marenigrum (strain WH8102).